Reading from the N-terminus, the 273-residue chain is Large ribosomal subunit protein uL2 (273 aa).

The segment at 196 to 273 (GNSDHGLESS…SSKYIIERRK (78 aa)) is disordered. 2 stretches are compositionally biased toward basic residues: residues 209 to 220 (GRTRWMGRRPRN) and 255 to 264 (LKTRAPKKQS).

This sequence belongs to the universal ribosomal protein uL2 family. In terms of assembly, part of the 50S ribosomal subunit. Forms a bridge to the 30S subunit in the 70S ribosome.

In terms of biological role, one of the primary rRNA binding proteins. Required for association of the 30S and 50S subunits to form the 70S ribosome, for tRNA binding and peptide bond formation. It has been suggested to have peptidyltransferase activity; this is somewhat controversial. Makes several contacts with the 16S rRNA in the 70S ribosome. The polypeptide is Large ribosomal subunit protein uL2 (Phocaeicola vulgatus (strain ATCC 8482 / DSM 1447 / JCM 5826 / CCUG 4940 / NBRC 14291 / NCTC 11154) (Bacteroides vulgatus)).